We begin with the raw amino-acid sequence, 223 residues long: Probable chemoreceptor glutamine deamidase CheD (223 aa).

Residues 189-223 are disordered; that stretch reads QTASAKAHTPPQIERFSAPAKPRFERFTRPSTATS.

This sequence belongs to the CheD family.

It carries out the reaction L-glutaminyl-[protein] + H2O = L-glutamyl-[protein] + NH4(+). Functionally, probably deamidates glutamine residues to glutamate on methyl-accepting chemotaxis receptors (MCPs), playing an important role in chemotaxis. This chain is Probable chemoreceptor glutamine deamidase CheD, found in Bordetella petrii (strain ATCC BAA-461 / DSM 12804 / CCUG 43448).